Here is a 138-residue protein sequence, read N- to C-terminus: Small ribosomal subunit protein uS11c (138 aa).

Residues 1 to 22 are disordered; the sequence is MAKAIPKISSRRNGRISSRKGA. The span at 9-22 shows a compositional bias: basic residues; the sequence is SSRRNGRISSRKGA.

This sequence belongs to the universal ribosomal protein uS11 family. As to quaternary structure, part of the 30S ribosomal subunit.

The protein resides in the plastid. It is found in the chloroplast. This chain is Small ribosomal subunit protein uS11c, found in Solanum bulbocastanum (Wild potato).